Consider the following 92-residue polypeptide: Probable Fe(2+)-trafficking protein (92 aa).

This sequence belongs to the Fe(2+)-trafficking protein family.

Functionally, could be a mediator in iron transactions between iron acquisition and iron-requiring processes, such as synthesis and/or repair of Fe-S clusters in biosynthetic enzymes. This Xanthomonas oryzae pv. oryzae (strain MAFF 311018) protein is Probable Fe(2+)-trafficking protein.